Consider the following 337-residue polypeptide: Heme A synthase (337 aa).

5 consecutive transmembrane segments (helical) span residues 6–26, 87–107, 119–139, 154–174, and 192–212; these read ITKW…IGGI, FIHR…LIYF, LPYI…WYMV, LAFH…QLIK, and LIFS…GALV. A heme-binding site is contributed by H256. The next 3 membrane-spanning stretches (helical) occupy residues 258–278, 285–305, and 308–328; these read LVGY…LKIE, IAYF…ITLL, and VPII…SIII. H316 provides a ligand contact to heme.

The protein belongs to the COX15/CtaA family. Type 2 subfamily. Interacts with CtaB. It depends on heme b as a cofactor.

Its subcellular location is the cell membrane. It catalyses the reaction Fe(II)-heme o + 2 A + H2O = Fe(II)-heme a + 2 AH2. It functions in the pathway porphyrin-containing compound metabolism; heme A biosynthesis; heme A from heme O: step 1/1. Catalyzes the conversion of heme O to heme A by two successive hydroxylations of the methyl group at C8. The first hydroxylation forms heme I, the second hydroxylation results in an unstable dihydroxymethyl group, which spontaneously dehydrates, resulting in the formyl group of heme A. This is Heme A synthase from Rickettsia africae (strain ESF-5).